The primary structure comprises 1013 residues: Probable beta-galactosidase B (1013 aa).

The signal sequence occupies residues Met-1 to Ala-21. Residue Tyr-90 participates in substrate binding. A glycan (N-linked (GlcNAc...) asparagine) is linked at Asn-100. Substrate contacts are provided by Asn-135, Ala-136, Glu-137, and Asn-195. Glu-196 serves as the catalytic Proton donor. Asn-211 carries N-linked (GlcNAc...) asparagine glycosylation. Substrate is bound at residue Tyr-265. Cys-271 and Cys-324 form a disulfide bridge. Glu-308 serves as the catalytic Nucleophile. Residue Tyr-373 participates in substrate binding. N-linked (GlcNAc...) asparagine glycosylation is found at Asn-411, Asn-442, Asn-456, Asn-626, Asn-735, Asn-768, and Asn-775.

Belongs to the glycosyl hydrolase 35 family.

The protein localises to the secreted. It carries out the reaction Hydrolysis of terminal non-reducing beta-D-galactose residues in beta-D-galactosides.. Cleaves beta-linked terminal galactosyl residues from gangliosides, glycoproteins, and glycosaminoglycans. This chain is Probable beta-galactosidase B (lacB), found in Penicillium rubens (strain ATCC 28089 / DSM 1075 / NRRL 1951 / Wisconsin 54-1255) (Penicillium chrysogenum).